A 410-amino-acid polypeptide reads, in one-letter code: Lipid droplet-regulating VLDL assembly factor AUP1 (410 aa).

N-acetylmethionine is present on methionine 1. Topologically, residues 1 to 20 (MEPPPAPGPERLFDSHRLPS) are cytoplasmic. An intramembrane segment occupies 21-41 (DGFLLLALLLYAPVGLCLLVL). Topologically, residues 42 to 410 (RLFLGLHVFL…FRERQAQEAE (369 aa)) are cytoplasmic. Positions 258 to 295 (RLTPADKAEHMKRQRHPRLRPQSVQSSFPSPPSPSSDV) are disordered. Serine 292 carries the post-translational modification Phosphoserine. The 43-residue stretch at 296–338 (QLTTLAHRVKEVLPHVPLNVIQRDLARTGCVDLTITNLLEGAV) folds into the CUE domain. Residues 344–369 (DVTEGSQSPPAPSAPKFPSSGLATPQ) form a disordered region. Position 363 is a phosphoserine (serine 363). A Phosphothreonine modification is found at threonine 367.

Belongs to the AUP1 family. In terms of assembly, identified in a complex that contains SEL1L, OS9, FAF2/UBXD8, UBE2J1/UBC6E and AUP1. Interacts with the cytoplasmic tail of ITGA2B, ITGA1, ITGA2, ITGA5, ITGAV and ITGAM. Interacts (via C-terminus) with UBE2G2; the interaction recruits UBE2G2 to lipid droplets. Interacts with ubiquitin ligases AMFR/gp78 and RNF139/TRC8; this promotes interaction of UBE2G2 with AMFR and RNF139. Interacts with apolipoprotein APOB. Monoubiquitinated and diubiquitinated. In terms of tissue distribution, ubiquitous.

The protein localises to the endoplasmic reticulum membrane. It localises to the lipid droplet. Its function is as follows. Plays a role in the translocation of terminally misfolded proteins from the endoplasmic reticulum lumen to the cytoplasm and their degradation by the proteasome. Plays a role in lipid droplet formation. Induces lipid droplet clustering. Recruits ubiquitin-conjugating enzyme UBE2G2 to lipid droplets which facilitates its interaction with ubiquitin ligases AMFR/gp78 and RNF139/TRC8, leading to sterol-induced ubiquitination of HMGCR and its subsequent proteasomal degradation. Also required for the degradation of INSIG1, SREBF1 and SREBF2. Plays a role in regulating assembly and secretion of very low density lipoprotein particles and stability of apolipoprotein APOB. The polypeptide is Lipid droplet-regulating VLDL assembly factor AUP1 (Mus musculus (Mouse)).